The following is a 396-amino-acid chain: DNA-directed RNA polymerase subunit 6 (396 aa).

2 disordered regions span residues 1–137 (MSSK…DIED) and 290–396 (NQQK…DYSE). Acidic residues-rich tracts occupy residues 21–53 (EYYD…DDEN), 76–88 (IDPD…DTDG), and 97–137 (EMGE…DIED). The span at 290-312 (NQQKNSTTDTETLSTQENASTRV) shows a compositional bias: polar residues. Low complexity-rich tracts occupy residues 313 to 338 (SGSN…SKSN) and 346 to 366 (NSRT…SRTG). Over residues 367 to 380 (SKSKKSSNTKSKSK) the composition is skewed to basic residues. A compositionally biased stretch (acidic residues) spans 385–396 (NSDDSDYSDYSE).

It belongs to the archaeal Rpo6/eukaryotic RPB6 RNA polymerase subunit family.

The enzyme catalyses RNA(n) + a ribonucleoside 5'-triphosphate = RNA(n+1) + diphosphate. DNA-dependent RNA polymerase catalyzes the transcription of DNA into RNA using the four ribonucleoside triphosphates as substrates. This is DNA-directed RNA polymerase subunit 6 from Acanthamoeba polyphaga (Amoeba).